A 265-amino-acid chain; its full sequence is Isoprenyl transferase (265 aa).

The active site involves Asp35. Residue Asp35 participates in Mg(2+) binding. Substrate-binding positions include Gly36–Arg39, Trp40, Arg48, His52, and Ser80–Glu82. Asn83 (proton acceptor) is an active-site residue. Residues Trp84, Arg86, Arg203, and Arg209–Ser211 contribute to the substrate site. Glu222 provides a ligand contact to Mg(2+).

This sequence belongs to the UPP synthase family. In terms of assembly, homodimer. Mg(2+) is required as a cofactor.

Its function is as follows. Catalyzes the condensation of isopentenyl diphosphate (IPP) with allylic pyrophosphates generating different type of terpenoids. The protein is Isoprenyl transferase of Chlorobaculum tepidum (strain ATCC 49652 / DSM 12025 / NBRC 103806 / TLS) (Chlorobium tepidum).